The sequence spans 754 residues: Neprilysin-1 (754 aa).

Residues 5–27 (FGPPIVFLISCYALILCGTVDAL) traverse the membrane as a helical; Signal-anchor for type II membrane protein segment. Residues Asn-38, Asn-81, Asn-132, Asn-217, Asn-273, Asn-303, and Asn-441 are each glycosylated (N-linked (GlcNAc...) asparagine). The Peptidase M13 domain maps to 63-754 (VGDSEGYQEA…MNPTKRCVVW (692 aa)). 4 disulfide bridges follow: Cys-87–Cys-739, Cys-95–Cys-699, Cys-151–Cys-414, and Cys-624–Cys-751. His-587 lines the Zn(2+) pocket. The active site involves Glu-588. A Zn(2+)-binding site is contributed by His-591. Asn-612 is a glycosylation site (N-linked (GlcNAc...) asparagine). Glu-649 serves as a coordination point for Zn(2+). Asp-653 functions as the Proton donor in the catalytic mechanism.

It belongs to the peptidase M13 family. The cofactor is Zn(2+). In terms of tissue distribution, specifically expressed in pharyngeal cells and a single head neuron.

It localises to the membrane. Probable cell surface protease. Required to control the neuronal innervation of pharyngeal pumping. The chain is Neprilysin-1 (nep-1) from Caenorhabditis elegans.